Reading from the N-terminus, the 633-residue chain is Hyphal wall protein 1 (633 aa).

A signal peptide spans 1 to 27 (MRLSTAQLIAIAYYMLSIGATVPQVDG). Disordered regions lie at residues 40–306 (SYDY…TTTT) and 411–569 (CPLT…SGAI). Over residues 42-114 (DYYQEPCDDY…DYPQQPQEPC (73 aa)) the composition is skewed to low complexity. The stretch at 46-58 (EPCDDYPQQQQQQ) is one 1; approximate repeat. Residues 46 to 187 (EPCDDYPQQQ…PNIPTDWIPD (142 aa)) are 14 X 10 AA tandem repeats of [EVIQ]-P-[CDT]-D-[YNW]-P-[PQ]-[QI]-[QP]-[QDN]. The stretch at 59–69 (EPCDYPQQQQQ) is one 2; approximate repeat. One copy of the 3; approximate repeat lies at 70–81 (EEPCDYPQQQPQ). Repeat copies occupy residues 82–91 (EPCDYPQQPQ), 92–101 (EPCDYPQQPQ), 102–111 (EPCDYPQQPQ), 112–121 (EPCDNPPQPD), 122–131 (VPCDNPPQPD), 132–141 (VPCDNPPQPD), 142–151 (IPCDNPPQPD), 152–161 (IPCDNPPQPD), and 162–171 (QPDDNPPIPN). Over residues 115 to 171 (DNPPQPDVPCDNPPQPDVPCDNPPQPDIPCDNPPQPDIPCDNPPQPDQPDDNPPIPN) the composition is skewed to pro residues. The stretch at 172 to 179 (IPTDWIPN) is one 13; truncated repeat. Composition is skewed to low complexity over residues 172–183 (IPTDWIPNIPTD) and 193–306 (TTPA…TTTT). One copy of the 14; truncated repeat lies at 180 to 187 (IPTDWIPD). 2 N-linked (GlcNAc...) asparagine glycosylation sites follow: Asn240 and Asn285. Positions 414 to 425 (TENTPGTDSTPE) are enriched in polar residues. The span at 507 to 549 (ETKPAAPKSSAPATEPSPVAPGTESAPAGPGASSSPKSSVLAS) shows a compositional bias: low complexity. N-linked (GlcNAc...) asparagine glycosylation occurs at Asn600. Gly612 is lipidated: GPI-anchor amidated glycine. Positions 613–633 (AGNNMRLTFGAAIIGIAAFLI) are cleaved as a propeptide — removed in mature form.

The protein belongs to the HWP1 family. Post-translationally, the GPI-anchor is attached to the protein in the endoplasmic reticulum and serves to target the protein to the cell surface. There, the glucosamine-inositol phospholipid moiety is cleaved off and the GPI-modified mannoprotein is covalently attached via its lipidless GPI glycan remnant to the 1,6-beta-glucan of the outer cell wall layer. N- and O-glycosylated.

It is found in the secreted. Its subcellular location is the cell wall. It localises to the membrane. Functionally, major hyphal cell wall protein which plays a role of adhesin and is required for mating, normal hyphal development, cell-to-cell adhesive functions necessary for biofilm integrity, attachment to host, and virulence. Promotes interactions with host and bacterial molecules, thus leading to effective colonization within polymicrobial communities. Plays a crucial role in gastrointestinal colonization, in mucosal symptomatic and asymptomatic infections, in vaginitis, as well as in lethal oroesophageal candidiasis, caused by the combined action of fungal virulence factors and host inflammatory responses when protective immunity is absent. In Candida albicans (strain WO-1) (Yeast), this protein is Hyphal wall protein 1.